The sequence spans 373 residues: MPPVPGVPFRNVDNDSPTSVELEDWVDAQHPTDEEEEEASSASSTLYLVFSPSSFSTSSSLILGGPEEEEVPSGVIPNLTESIPSSPPQGPPQGPSQSPLSSCCSSFSWSSFSEESSSQKGEDTGTCQGLPDSESSFTYTLDEKVAELVEFLLLKYEAEEPVTEAEMLMIVIKYKDYFPVILKRAREFMELLFGLALIEVGPDHFCVFANTVGLTDEGSDDEGMPENSLLIIILSVIFIKGNCASEEVIWEVLNAVGVYAGREHFVYGEPRELLTKVWVQGHYLEYREVPHSSPPYYEFLWGPRAHSESIKKKVLEFLAKLNNTVPSSFPSWYKDALKDVEERVQATIDTADDATVMASESLSVMSSNVSFSE.

Residues 1–102 (MPPVPGVPFR…QGPSQSPLSS (102 aa)) are disordered. Residues 40–60 (SSASSTLYLVFSPSSFSTSSS) are compositionally biased toward low complexity. The segment covering 85–94 (SSPPQGPPQG) has biased composition (pro residues). The interval 135–373 (SSFTYTLDEK…VMSSNVSFSE (239 aa)) is interaction with TRIM28. An MAGE domain is found at 141–336 (LDEKVAELVE…SSFPSWYKDA (196 aa)).

As to quaternary structure, interacts with TRIM28 and UBE2H. In terms of tissue distribution, not expressed in normal tissues, except in germ cells in the seminiferous tubules and in Purkinje cells of the cerebellum. Expressed in various tumors, including melanoma, lymphoma, as well as pancreatic cancer, mammary gland cancer, non-small cell lung cancer and liver cancer. In hepatocellular carcinoma, there is an inverse correlation between tumor differentiation and protein expression, i.e. the lower the differentiation, the higher percentage of expression.

It is found in the cytoplasm. The protein resides in the nucleus. Its function is as follows. Proposed to enhance ubiquitin ligase activity of RING-type zinc finger-containing E3 ubiquitin-protein ligases. In vitro enhances ubiquitin ligase activity of TRIM28 and stimulates p53/TP53 ubiquitination in presence of Ubl-conjugating enzyme UBE2H leading to p53/TP53 degradation. Proposed to act through recruitment and/or stabilization of the Ubl-conjugating enzymes (E2) at the E3:substrate complex. The polypeptide is Melanoma-associated antigen C2 (MAGEC2) (Homo sapiens (Human)).